The following is a 397-amino-acid chain: Elongation factor Tu-1 (397 aa).

The region spanning 10–206 (KPHVNIGTIG…AVDESIPEPE (197 aa)) is the tr-type G domain. Positions 19–26 (GHIDHGKT) are G1. Position 19-26 (19-26 (GHIDHGKT)) interacts with GTP. Threonine 26 contacts Mg(2+). The interval 62–66 (GITIS) is G2. A G3 region spans residues 83–86 (DCPG). GTP contacts are provided by residues 83-87 (DCPGH) and 138-141 (NKAD). Residues 138 to 141 (NKAD) form a G4 region. Positions 176–178 (SAL) are G5.

It belongs to the TRAFAC class translation factor GTPase superfamily. Classic translation factor GTPase family. EF-Tu/EF-1A subfamily. In terms of assembly, monomer.

It localises to the cytoplasm. It carries out the reaction GTP + H2O = GDP + phosphate + H(+). Its function is as follows. GTP hydrolase that promotes the GTP-dependent binding of aminoacyl-tRNA to the A-site of ribosomes during protein biosynthesis. In Streptomyces ramocissimus, this protein is Elongation factor Tu-1.